A 344-amino-acid chain; its full sequence is Protein AIR2 (344 aa).

The tract at residues 1 to 23 (MEKNTAPFVVDTAPTTPPDKLVA) is disordered. A phosphoserine mark is found at S31 and S49. 3 CCHC-type zinc fingers span residues 61–78 (PKCN…DCPH), 99–116 (IQCS…QCPH), and 162–179 (IYCY…DCKE). Disordered stretches follow at residues 227-274 (YDED…PTIR) and 312-344 (STYV…GKRR). The span at 317 to 337 (NNSISNSSNYRNYNSYQPYRS) shows a compositional bias: low complexity.

It belongs to the AIR1 family. In terms of assembly, component of the TRAMP complex (also called TRF4 complex) composed of at least HUL4, MTR4, PAP2/TRF4 and either AIR1 or AIR2. Interacts with HMT1 and NPL3. The interaction with NPL3 requires the presence of HMT1. Interacts directly with PAP2.

It is found in the nucleus. In terms of biological role, component of the TRAMP (TRF4) complex which has a poly(A) RNA polymerase activity and is involved in a post-transcriptional quality control mechanism limiting inappropriate expression of genetic information. Polyadenylation is required for the degradative activity of the exosome on several of its nuclear RNA substrates like cryptic transcripts generated by RNA polymerase II and III, or hypomethylated pre-tRNAi-Met. Both complexes polyadenylate RNA processing and degradation intermediates of snRNAs, snoRNAs and mRNAs that accumulate in strains lacking a functional exosome. AIR2 also inhibits the methylation of NPL3 mediated by HMT1 through its interaction with HMT1. This is Protein AIR2 (AIR2) from Saccharomyces cerevisiae (strain ATCC 204508 / S288c) (Baker's yeast).